The chain runs to 803 residues: Elongation factor G, mitochondrial (803 aa).

The transit peptide at methionine 1–proline 24 directs the protein to the mitochondrion. The 287-residue stretch at serine 102–serine 388 folds into the tr-type G domain. GTP-binding positions include alanine 111 to threonine 118, aspartate 186 to histidine 190, and asparagine 240 to aspartate 243.

Belongs to the TRAFAC class translation factor GTPase superfamily. Classic translation factor GTPase family. EF-G/EF-2 subfamily.

The protein localises to the mitochondrion. Its pathway is protein biosynthesis; polypeptide chain elongation. Functionally, mitochondrial GTPase that catalyzes the GTP-dependent ribosomal translocation step during translation elongation. During this step, the ribosome changes from the pre-translocational (PRE) to the post-translocational (POST) state as the newly formed A-site-bound peptidyl-tRNA and P-site-bound deacylated tRNA move to the P and E sites, respectively. Catalyzes the coordinated movement of the two tRNA molecules, the mRNA and conformational changes in the ribosome. In Talaromyces marneffei (strain ATCC 18224 / CBS 334.59 / QM 7333) (Penicillium marneffei), this protein is Elongation factor G, mitochondrial (mef1).